The following is an 88-amino-acid chain: Small ribosomal subunit protein bS18B (88 aa).

Belongs to the bacterial ribosomal protein bS18 family. Part of the 30S ribosomal subunit. Forms a tight heterodimer with protein bS6.

Functionally, binds as a heterodimer with protein bS6 to the central domain of the 16S rRNA, where it helps stabilize the platform of the 30S subunit. The protein is Small ribosomal subunit protein bS18B of Roseiflexus castenholzii (strain DSM 13941 / HLO8).